A 282-amino-acid chain; its full sequence is Trans,polycis-polyprenyl diphosphate synthase ((2Z,6E)-farnesyl diphosphate specific) (282 aa).

Residues 1-30 form a disordered region; the sequence is MSPKTVFSTDTHREPIPPQPHPSGARPPQL. Residue D44 is part of the active site. D44 contacts Mg(2+). Residues 45-48, W49, R57, H61, and 89-91 each bind substrate; these read GNGR and STE. N92 (proton acceptor) is an active-site residue. Substrate is bound by residues W93, R95, R212, and 218–220; that span reads RLS. Residue E231 participates in Mg(2+) binding. Residues 262–282 form a disordered region; it reads GGAEPNPVGPPQSAAGAQGQD.

It belongs to the UPP synthase family. Homodimer. The cofactor is Mg(2+).

The catalysed reaction is (2Z,6E)-farnesyl diphosphate + 10 isopentenyl diphosphate = di-trans,deca-cis-tridecaprenyl diphosphate + 10 diphosphate. The enzyme catalyses (2Z,6E)-farnesyl diphosphate + 11 isopentenyl diphosphate = di-trans,undeca-cis-tetradecaprenyl diphosphate + 11 diphosphate. It carries out the reaction (2Z,6E)-farnesyl diphosphate + 9 isopentenyl diphosphate = di-trans,nona-cis-dodecaprenyl diphosphate + 9 diphosphate. Catalyzes the synthesis of Z,E-mixed prenyl diphosphates by a condensation of isopentenyl diphosphate to an allylic diphosphate. It shows a large substrate specificity accepting dimethylallyl diphosphate (DMAPP), GPP, E,Efarnesyl diphosphate (FPP), E,E,E-geranylgeranyl diphosphate (GGPP), neryl diphosphate (Z-GPP), and (2Z,6E)-farnesyl diphosphate (Z,E-FPP) as allylic substrates. The enzyme exhibits the highest activity when Z,E-FPP is employed as an allylic substrate. The major product is dodecaprenyl diphosphate (C60) under every allylic substrate conditions, but the enzyme is also able to synthesize even C70 prenyl diphosphate as the maximum chain-length product. The chain is Trans,polycis-polyprenyl diphosphate synthase ((2Z,6E)-farnesyl diphosphate specific) from Thermobifida fusca (strain YX).